We begin with the raw amino-acid sequence, 330 residues long: Ketol-acid reductoisomerase (NADP(+)) (330 aa).

Residues 1-181 (MKVFYDSDFK…GLSRAGVIQT (181 aa)) form the KARI N-terminal Rossmann domain. Residues 24–27 (YGSQ), arginine 47, serine 52, and 82–85 (DELQ) contribute to the NADP(+) site. Histidine 107 is a catalytic residue. Glycine 133 contacts NADP(+). The KARI C-terminal knotted domain occupies 182 to 327 (TFKEETETDL…AKLRKMCGLE (146 aa)). The Mg(2+) site is built by aspartate 190, glutamate 194, glutamate 226, and glutamate 230. Serine 251 is a substrate binding site.

This sequence belongs to the ketol-acid reductoisomerase family. Mg(2+) serves as cofactor.

It catalyses the reaction (2R)-2,3-dihydroxy-3-methylbutanoate + NADP(+) = (2S)-2-acetolactate + NADPH + H(+). It carries out the reaction (2R,3R)-2,3-dihydroxy-3-methylpentanoate + NADP(+) = (S)-2-ethyl-2-hydroxy-3-oxobutanoate + NADPH + H(+). Its pathway is amino-acid biosynthesis; L-isoleucine biosynthesis; L-isoleucine from 2-oxobutanoate: step 2/4. The protein operates within amino-acid biosynthesis; L-valine biosynthesis; L-valine from pyruvate: step 2/4. Functionally, involved in the biosynthesis of branched-chain amino acids (BCAA). Catalyzes an alkyl-migration followed by a ketol-acid reduction of (S)-2-acetolactate (S2AL) to yield (R)-2,3-dihydroxy-isovalerate. In the isomerase reaction, S2AL is rearranged via a Mg-dependent methyl migration to produce 3-hydroxy-3-methyl-2-ketobutyrate (HMKB). In the reductase reaction, this 2-ketoacid undergoes a metal-dependent reduction by NADPH to yield (R)-2,3-dihydroxy-isovalerate. The polypeptide is Ketol-acid reductoisomerase (NADP(+)) (Methanococcus maripaludis (strain C7 / ATCC BAA-1331)).